We begin with the raw amino-acid sequence, 82 residues long: Large ribosomal subunit protein bL28 (82 aa).

Belongs to the bacterial ribosomal protein bL28 family.

The protein is Large ribosomal subunit protein bL28 of Vesicomyosocius okutanii subsp. Calyptogena okutanii (strain HA).